Here is a 137-residue protein sequence, read N- to C-terminus: Ribosome-binding factor A (137 aa).

The protein belongs to the RbfA family. Monomer. Binds 30S ribosomal subunits, but not 50S ribosomal subunits or 70S ribosomes.

It localises to the cytoplasm. One of several proteins that assist in the late maturation steps of the functional core of the 30S ribosomal subunit. Associates with free 30S ribosomal subunits (but not with 30S subunits that are part of 70S ribosomes or polysomes). Required for efficient processing of 16S rRNA. May interact with the 5'-terminal helix region of 16S rRNA. The sequence is that of Ribosome-binding factor A from Allorhizobium ampelinum (strain ATCC BAA-846 / DSM 112012 / S4) (Agrobacterium vitis (strain S4)).